The following is a 297-amino-acid chain: tRNA (guanine-N(7)-)-methyltransferase (297 aa).

S-adenosyl-L-methionine contacts are provided by residues G101, 124–125 (EI), 171–172 (NT), and C191. The active site involves D194. Position 270–272 (270–272 (TEE)) interacts with S-adenosyl-L-methionine.

The protein belongs to the class I-like SAM-binding methyltransferase superfamily. TrmB family. In terms of assembly, forms a complex with trm82.

It is found in the nucleus. The catalysed reaction is guanosine(46) in tRNA + S-adenosyl-L-methionine = N(7)-methylguanosine(46) in tRNA + S-adenosyl-L-homocysteine. Its pathway is tRNA modification; N(7)-methylguanine-tRNA biosynthesis. Its function is as follows. Catalyzes the formation of N(7)-methylguanine at position 46 (m7G46) in tRNA. The sequence is that of tRNA (guanine-N(7)-)-methyltransferase (trm8) from Aspergillus niger (strain ATCC MYA-4892 / CBS 513.88 / FGSC A1513).